The sequence spans 536 residues: ATP synthase subunit alpha, mitochondrial (536 aa).

Residues 1 to 24 constitute a mitochondrion transit peptide; the sequence is MFKNALRRAGVAAPRISRVAQRGY. 195-202 is an ATP binding site; the sequence is GDRQTGKT.

F-type ATP synthases have 2 components, the catalytic core F(1) and the membrane-embedded component F(0), linked together by a central stalk and a peripheral stalk. The central stalk, also called rotor shaft, is often seen as part of F(1). The peripheral stalk is seen as part of F(0). F(0) contains the membrane channel next to the rotor. F-type ATP synthases form dimers but each monomer functions independently in ATP generation. The dimer consists of 17 different polypeptides: ATP1 (subunit alpha, 3 molecules per monomer, part of F(1)), ATP2 (subunit beta, 3 copies per monomer, part of F(1)), ATP3 (subunit gamma, part of the central stalk), ATP4 (subunit b, part of the peripheral stalk), ATP5/OSCP (subunit 5/OSCP, part of the peripheral stalk), ATP6 (subunit a, part of the peripheral stalk), ATP7 (subunit d, part of the peripheral stalk), ATP8 (subunit 8, part of the peripheral stalk), OLI1 (subunit c, part of the rotor, 10 molecules per monomer), ATP14 (subunit h, part of the peripheral stalk), ATP15 (subunit epsilon, part of the central stalk), ATP16 (subunit delta, part of the central stalk), ATP17 (subunit f, part of the peripheral stalk), ATP18 (subunit i/j, part of the peripheral stalk), ATP19 (subunit k, dimer-specific, at interface between monomers), ATP20 (subunit g, at interface between monomers), TIM11 (subunit e, at interface between monomers).

The protein resides in the mitochondrion inner membrane. Its function is as follows. Mitochondrial membrane ATP synthase (F(1)F(0) ATP synthase or Complex V) produces ATP from ADP in the presence of a proton gradient across the membrane which is generated by electron transport complexes of the respiratory chain. F-type ATP synthases consist of two structural domains, F(1) - containing the extramembraneous catalytic core, and F(0) - containing the membrane proton channel, linked together by a central stalk and a peripheral stalk. During catalysis, ATP synthesis in the catalytic domain of F(1) is coupled via a rotary mechanism of the central stalk subunits to proton translocation. Subunits alpha/ATP1 and beta/ATP2 form the catalytic core in F(1). Rotation of the central stalk against the surrounding alpha/ATP1(3)beta/ATP2(3) subunits leads to hydrolysis of ATP in three separate catalytic sites on the beta/ATP2 subunits. Subunit alpha/ATP1 does not bear the catalytic high-affinity ATP-binding sites. The chain is ATP synthase subunit alpha, mitochondrial from Yarrowia lipolytica (strain CLIB 122 / E 150) (Yeast).